The following is a 260-amino-acid chain: Carbonic anhydrase 3 (260 aa).

Ala2 carries the N-acetylalanine modification. The Alpha-carbonic anhydrase domain occupies 3–259; the sequence is KEWGYADHNG…IKGRIVKASF (257 aa). Ser29, Ser43, Ser50, and Ser55 each carry phosphoserine. The involved in proton transfer stretch occupies residues 64-67; that stretch reads KTCR. Thr73 bears the Phosphothreonine mark. The Zn(2+) site is built by His94, His96, and His119. At Tyr127 the chain carries Phosphotyrosine. Thr176 is modified (phosphothreonine). S-glutathionyl cysteine occurs at positions 182 and 187. Residue 198–199 participates in substrate binding; the sequence is TT. Phosphothreonine is present on Thr216. Ser219 bears the Phosphoserine mark.

Belongs to the alpha-carbonic anhydrase family. It depends on Zn(2+) as a cofactor. S-thiolated both by thiol-disulfide exchange with glutathione disulfide and by oxyradical-initiated S-thiolation with reduced glutathione. Post-translationally, S-glutathionylated in hepatocytes under oxidative stress.

It is found in the cytoplasm. The enzyme catalyses hydrogencarbonate + H(+) = CO2 + H2O. With respect to regulation, inhibited by acetazolamide. Functionally, reversible hydration of carbon dioxide. The chain is Carbonic anhydrase 3 from Sus scrofa (Pig).